A 204-amino-acid chain; its full sequence is Inositol diphosphatase DSP2 (204 aa).

The segment at 1 to 27 (MQLEISPRQRSQQQKEEEGEHQQRAGE) is disordered. A compositionally biased stretch (basic and acidic residues) spans 13-27 (QQKEEEGEHQQRAGE). Positions 51-203 (NFAEVNDGIF…SSLMHLTASQ (153 aa)) constitute a Tyrosine-protein phosphatase domain. The interval 107-119 (FGIDGSKELLVNI) is WPD loop important for active site topology. Residues asparagine 118, isoleucine 119, and lysine 123 each coordinate 1D-myo-inositol hexakisphosphate. The Phosphocysteine intermediate role is filled by cysteine 143.

It belongs to the protein-tyrosine phosphatase family. Atypical dual-specificity phosphatase Siw14-like subfamily. Expressed in roots and young panicles.

The protein localises to the cytoplasm. It is found in the nucleus. The enzyme catalyses 5-diphospho-1D-myo-inositol 1,2,3,4,6-pentakisphosphate + H2O = 1D-myo-inositol hexakisphosphate + phosphate + H(+). It carries out the reaction 1,5-bis(diphospho)-1D-myo-inositol 2,3,4,6-tetrakisphosphate + H2O = 1-diphospho-1D-myo-inositol 2,3,4,5,6-pentakisphosphate + phosphate + 2 H(+). The catalysed reaction is 3,5-bis(diphospho)-1D-myo-inositol 1,2,4,6-tetrakisphosphate + H2O = 3-diphospho-1D-myo-inositol 1,2,4,5,6-pentakisphosphate + phosphate + 2 H(+). It catalyses the reaction 6-diphospho-1D-myo-inositol pentakisphosphate + H2O = 1D-myo-inositol hexakisphosphate + phosphate + H(+). In terms of biological role, cleaves the beta-phosphate at the 5-position of soluble inositol pyrophosphates. Has highest activity on 5-diphosphoinositol 1,2,3,4,6-pentakisphosphate (5-InsP(7)). Acts as a negative regulator of defense responses against the fungal pathogen Magnaporthe oryzae. In Oryza sativa subsp. japonica (Rice), this protein is Inositol diphosphatase DSP2.